A 344-amino-acid chain; its full sequence is MEFIRAEILGTTFETTSRYANVQPVGLGAFGLVCSAYDQITQQHVAVKKMMNPFANASIAKRTYREVKLLKQLRHENLIGLCDIFISPLEDIYLVTELLGTDLGRLLRARPLDNKFAQYFMYQILRGLKYIHSAGVIHRDLKPSNLLVNENCDLKICDFGLARVQEPQMTGYVSTRYYRAPEIMLTWQRYGKMVDIWSAGCILAEMLRGKPLFPGKDHIHQFFLITEVLGNPPPEVVQKITSGNTQRVVNSLPNQEPRPLRAVFHEFDNDVISLLEQLLLFDPDKRLTAETALQHPYLAPYHDPDDEPAALEKFDWSFNDADLPIDTWKLMMCVAIGSAKCAPN.

Residues 19–298 (YANVQPVGLG…AETALQHPYL (280 aa)) form the Protein kinase domain. ATP is bound by residues 25 to 33 (VGLGAFGLV) and Lys-48. Asp-140 (proton acceptor) is an active-site residue. Thr-170 carries the post-translational modification Phosphothreonine. The TXY signature appears at 170 to 172 (TGY). The residue at position 172 (Tyr-172) is a Phosphotyrosine.

The protein belongs to the protein kinase superfamily. Ser/Thr protein kinase family. MAP kinase subfamily. HOG1 sub-subfamily. Mg(2+) serves as cofactor. In terms of processing, dually phosphorylated on Thr-170 and Tyr-172, which activates the enzyme.

It catalyses the reaction L-seryl-[protein] + ATP = O-phospho-L-seryl-[protein] + ADP + H(+). The catalysed reaction is L-threonyl-[protein] + ATP = O-phospho-L-threonyl-[protein] + ADP + H(+). Activated by tyrosine and threonine phosphorylation. Mitogen-activated protein kinase required for growth on media where sorbitol or mannitol is the sole carbon source. The polypeptide is Mitogen-activated protein kinase mpkC (mpkC) (Aspergillus oryzae (strain ATCC 42149 / RIB 40) (Yellow koji mold)).